An 81-amino-acid polypeptide reads, in one-letter code: Cytochrome b559 subunit alpha (81 aa).

The chain crosses the membrane as a helical span at residues valine 21–tryptophan 35. Histidine 23 contributes to the heme binding site.

The protein belongs to the PsbE/PsbF family. As to quaternary structure, heterodimer of an alpha subunit and a beta subunit. PSII is composed of 1 copy each of membrane proteins PsbA, PsbB, PsbC, PsbD, PsbE, PsbF, PsbH, PsbI, PsbJ, PsbK, PsbL, PsbM, PsbT, PsbX, PsbY, PsbZ, Psb30/Ycf12, peripheral proteins PsbO, CyanoQ (PsbQ), PsbU, PsbV and a large number of cofactors. It forms dimeric complexes. Heme b is required as a cofactor.

The protein resides in the cellular thylakoid membrane. Its function is as follows. This b-type cytochrome is tightly associated with the reaction center of photosystem II (PSII). PSII is a light-driven water:plastoquinone oxidoreductase that uses light energy to abstract electrons from H(2)O, generating O(2) and a proton gradient subsequently used for ATP formation. It consists of a core antenna complex that captures photons, and an electron transfer chain that converts photonic excitation into a charge separation. In Crocosphaera subtropica (strain ATCC 51142 / BH68) (Cyanothece sp. (strain ATCC 51142)), this protein is Cytochrome b559 subunit alpha.